The sequence spans 550 residues: Leiomodin-2 (550 aa).

Residues 1 to 47 (MSTFGYRRGLSKYESIDEDELLASLSPEELKELERELEDIEPDRNLP) form an interaction with tropomyosin alpha region. Interaction with actin regions lie at residues 1 to 165 (MSTF…TDNS), 166 to 500 (KPKT…KEIK), and 524 to 543 (VHENLMEAIRGSSIRQLRRV). Phosphoserine occurs at positions 11, 15, and 24. Residues 84 to 94 (ERLGECGKVAE) are compositionally biased toward basic and acidic residues. 2 disordered regions span residues 84-202 (ERLG…PCGN) and 359-527 (MDKQ…VHEN). Residues 91-147 (KVAEEDKEESEEELIFTESNSEVSEEVCTEDEEESQEEEEDSEEEEDSEEEEETTEA) adopt a coiled-coil conformation. 2 stretches are compositionally biased toward acidic residues: residues 95–105 (EDKEESEEELI) and 113–145 (VSEEVCTEDEEESQEEEEDSEEEEDSEEEEETT). Composition is skewed to polar residues over residues 151-164 (INGTVSYNSVNTDN) and 170-193 (FKSQIENINLTNGNSGRTQRNSES). The span at 359-377 (MDKQRQKRMQEQKQQEGHD) shows a compositional bias: basic and acidic residues. Positions 391-402 (TPGSSPYASPRQ) are enriched in polar residues. S407 is subject to Phosphoserine. Residues 421–452 (PPSPVAPPPPPPPPPLPPHMLPPPPPPPAPPL) are compositionally biased toward pro residues. The span at 468 to 479 (QQESAQRALQNG) shows a compositional bias: polar residues. Residues 480 to 490 (QRKKKGKKVKK) show a composition bias toward basic residues. The span at 497–515 (KEIKNSLRSVQEKKMEDSS) shows a compositional bias: basic and acidic residues. Positions 524–543 (VHENLMEAIRGSSIRQLRRV) constitute a WH2 domain.

It belongs to the tropomodulin family. Can bind at least three actin monomers and thereby provides a nucleus for actin filament formation. Interacts (via N-terminus) with tropomyosin alpha (TPM1) (via N-terminus). May also interact with TPM2 (via N-terminus). Interacts with FLII. Detected in neonate heart (at protein level). Detected in embryonic heart and in pharyngeal arches. Detected in adult heart.

The protein localises to the cytoplasm. It localises to the myofibril. It is found in the sarcomere. The protein resides in the m line. Its subcellular location is the cytoskeleton. Its function is as follows. Mediates nucleation of actin filaments and thereby promotes actin polymerization. Plays a role in the regulation of actin filament length. Required for normal sarcomere organization in the heart, and for normal heart function. The protein is Leiomodin-2 (Lmod2) of Mus musculus (Mouse).